Reading from the N-terminus, the 488-residue chain is Cobyric acid synthase (488 aa).

The region spanning 247 to 440 (LLRVIVPVLP…VHGVFDEPTA (194 aa)) is the GATase cobBQ-type domain. C328 acts as the Nucleophile in catalysis. H432 is an active-site residue.

The protein belongs to the CobB/CobQ family. CobQ subfamily.

The protein operates within cofactor biosynthesis; adenosylcobalamin biosynthesis. Catalyzes amidations at positions B, D, E, and G on adenosylcobyrinic A,C-diamide. NH(2) groups are provided by glutamine, and one molecule of ATP is hydrogenolyzed for each amidation. The chain is Cobyric acid synthase from Cupriavidus pinatubonensis (strain JMP 134 / LMG 1197) (Cupriavidus necator (strain JMP 134)).